The sequence spans 100 residues: Small ribosomal subunit protein uS14c (100 aa).

It belongs to the universal ribosomal protein uS14 family. As to quaternary structure, part of the 30S ribosomal subunit.

Its subcellular location is the plastid. It is found in the chloroplast. Functionally, binds 16S rRNA, required for the assembly of 30S particles. In Chloranthus spicatus (Chulantree), this protein is Small ribosomal subunit protein uS14c.